Reading from the N-terminus, the 211-residue chain is UPF0637 protein Bsph_1379 (211 aa).

It belongs to the UPF0637 family.

The chain is UPF0637 protein Bsph_1379 from Lysinibacillus sphaericus (strain C3-41).